The following is a 239-amino-acid chain: MLKNFMKNKKGAVGIGTLIIFIALVLVAAVAASVIINTAGKLQHKAAVVGQETTQQVASGLQVVKITGHSVDQYNLDKIAILVSPNIGDEIDLATTVVTFSTDDRKMSLLYDSSNASNGGKVRLSTANGTSDIFKYDDVYAIGAWPFEDPTYGQSDQDPNEKKFGIVVLQDMDNSVSGEHPTVNYGDKVLLAINIGNIVGENIGNRIRIQGEVVPEFGAPGIIDFTTPPVYANRVVALQ.

Residues 1–11 (MLKNFMKNKKG) constitute a propeptide that is removed on maturation. N-linked (GlcNAc...) asparagine glycosylation is found at Asn-115 and Asn-128.

It belongs to the archaeal flagellin family. Post-translationally, N-linked glycans consist of the 779 Da trisaccharide beta-ManNAc(Thr)-(1-4)-beta-GlcNAc3NAcA-(1-3)-beta-GlcNAc.

The protein localises to the archaeal flagellum. Flagellin is the subunit protein which polymerizes to form the filaments of archaeal flagella. The polypeptide is Flagellin B3 (flaB3) (Methanococcus voltae).